Consider the following 427-residue polypeptide: MGSVRTNRYSIVSSEEDGMKLATMAVANGFGNGKSKVHTRQQCRSRFVKKDGHCNVQFINVGEKGQRYLADIFTTCVDIRWRWMLVIFCLAFVLSWLFFGCVFWLIALLHGDLDASKESKACVSEVNSFTAAFLFSIETQTTIGYGFRCVTDECPIAVFMVVFQSIVGCIIDAFIIGAVMAKMAKPKKRNETLVFSHNAVIAMRDGKLCLMWRVGNLRKSHLVEAHVRAQLLKSRITSEGEYIPLDQIDINVGFDSGIDRIFLVSPITIVHEIDEDSPLYDLSKQDIDNADFEIVVILEGMVEATAMTTQCRSSYLANEILWGHRYEPVLFEEKHCYKVDYSRFHKTYEVPNTPLCSARDLAEKKYILSNANSFCYENEVALTSKEEEDSENGVPESTSTDSPPGIDLHNQASVPLEPRPLRRESEI.

The Cytoplasmic portion of the chain corresponds to Met1 to Trp81. Position 76 is an S-nitrosocysteine (Cys76). Residues Arg82–Ile106 form a helical membrane-spanning segment. Residues Ala107–Ser128 are Extracellular-facing. The helical; Pore-forming intramembrane region spans Phe129–Gln140. The segment at residues Thr141 to Phe147 is an intramembrane region (pore-forming). The Selectivity filter motif lies at Thr142–Phe147. Topologically, residues Arg148 to Ile156 are extracellular. Residues Ala157–Ala178 traverse the membrane as a helical segment. Over Val179 to Ile427 the chain is Cytoplasmic. A polyphosphoinositide (PIP2)-binding region spans residues Ala181 to Leu208. Residues Thr383–Ile427 are disordered. The short motif at Ser425–Ile427 is the PDZ-binding element.

The protein belongs to the inward rectifier-type potassium channel (TC 1.A.2.1) family. KCNJ2 subfamily. Homotetramer. Homomultimeric and heteromultimeric association with KCNJ4/Kir2.3. Can form heteromeric channels with Kir2.6/KCNJ18. Associates, via its PDZ-recognition domain, with a complex containing LIN7A, LIN7B, LIN7C, DLG1, CASK and APBA1. S-nitrosylation increases the open probability and inward rectifying currents. As to expression, prominently expressed in the central nervous system. Also found in other excitable tissues such as heart and skeletal muscle.

It is found in the cell membrane. It localises to the sarcolemma. The protein localises to the T-tubule. The catalysed reaction is K(+)(in) = K(+)(out). Its activity is regulated as follows. Activated by phosphatidylinositol 4,5 biphosphate (PtdIns(4,5)P2). Its function is as follows. Inward rectifier potassium channels are characterized by a greater tendency to allow potassium to flow into the cell rather than out of it. Their voltage dependence is regulated by the concentration of extracellular potassium; as external potassium is raised, the voltage range of the channel opening shifts to more positive voltages. The inward rectification is mainly due to the blockage of outward current by internal magnesium. Can be blocked by extracellular barium and cesium. Probably participates in establishing action potential waveform and excitability of neuronal and muscle tissues. The protein is Inward rectifier potassium channel 2 (Kcnj2) of Rattus norvegicus (Rat).